The sequence spans 1097 residues: Translation initiation factor IF-2 (1097 aa).

Residues Leu79–Ala458 form a disordered region. The span at Ala97–Leu112 shows a compositional bias: basic and acidic residues. Over residues Ala157–Glu173 the composition is skewed to low complexity. Composition is skewed to basic and acidic residues over residues Glu174–Ser190 and Val202–Glu221. The segment covering Thr224 to Ala236 has biased composition (low complexity). A compositionally biased stretch (polar residues) spans Arg258–Ser267. Over residues Glu268–Met286 the composition is skewed to basic and acidic residues. Positions Ser340–Asn363 are enriched in polar residues. The segment covering His376–Asn385 has biased composition (basic residues). A compositionally biased stretch (basic and acidic residues) spans Pro402–Leu443. The tr-type G domain maps to Thr591 to Lys761. The segment at Gly600 to Thr607 is G1. Gly600–Thr607 lines the GTP pocket. The tract at residues Gly625–His629 is G2. The segment at Asp647–Gly650 is G3. GTP is bound by residues Asp647–His651 and Asn701–Asp704. The G4 stretch occupies residues Asn701 to Asp704. The G5 stretch occupies residues Ser737 to Lys739.

Belongs to the TRAFAC class translation factor GTPase superfamily. Classic translation factor GTPase family. IF-2 subfamily.

It is found in the cytoplasm. One of the essential components for the initiation of protein synthesis. Protects formylmethionyl-tRNA from spontaneous hydrolysis and promotes its binding to the 30S ribosomal subunits. Also involved in the hydrolysis of GTP during the formation of the 70S ribosomal complex. The sequence is that of Translation initiation factor IF-2 from Chloroherpeton thalassium (strain ATCC 35110 / GB-78).